Reading from the N-terminus, the 483-residue chain is Glutarate-semialdehyde dehydrogenase (483 aa).

NADP(+)-binding positions include 156-157 (WN), 180-183 (KPAS), and 233-234 (GS). The active-site Proton acceptor is glutamate 255. Leucine 256 contacts NADP(+). The active-site Nucleophile is cysteine 289. An NADP(+)-binding site is contributed by glutamate 386.

Belongs to the aldehyde dehydrogenase family.

The catalysed reaction is 5-oxopentanoate + NADP(+) + H2O = glutarate + NADPH + 2 H(+). It participates in amino-acid degradation. Catalyzes the conversion of 5-oxopentanoate (glutarate semialdehyde) to glutarate. Involved in L-lysine degradation. This is Glutarate-semialdehyde dehydrogenase from Pseudomonas aeruginosa (strain ATCC 15692 / DSM 22644 / CIP 104116 / JCM 14847 / LMG 12228 / 1C / PRS 101 / PAO1).